The chain runs to 406 residues: Tryptophan synthase beta chain (406 aa).

Lysine 99 carries the post-translational modification N6-(pyridoxal phosphate)lysine.

This sequence belongs to the TrpB family. Tetramer of two alpha and two beta chains. Requires pyridoxal 5'-phosphate as cofactor.

The catalysed reaction is (1S,2R)-1-C-(indol-3-yl)glycerol 3-phosphate + L-serine = D-glyceraldehyde 3-phosphate + L-tryptophan + H2O. It participates in amino-acid biosynthesis; L-tryptophan biosynthesis; L-tryptophan from chorismate: step 5/5. Functionally, the beta subunit is responsible for the synthesis of L-tryptophan from indole and L-serine. In Chelativorans sp. (strain BNC1), this protein is Tryptophan synthase beta chain.